Reading from the N-terminus, the 657-residue chain is Histidine ammonia-lyase (657 aa).

Positions A253–G255 form a cross-link, 5-imidazolinone (Ala-Gly). 2,3-didehydroalanine (Ser) is present on S254. Residue T396 is modified to Phosphothreonine. Phosphoserine is present on S635. T637 carries the post-translational modification Phosphothreonine. S648 carries the post-translational modification Phosphoserine.

This sequence belongs to the PAL/histidase family. In terms of processing, contains an active site 4-methylidene-imidazol-5-one (MIO), which is formed autocatalytically by cyclization and dehydration of residues Ala-Ser-Gly. In terms of tissue distribution, liver and skin.

It carries out the reaction L-histidine = trans-urocanate + NH4(+). The protein operates within amino-acid degradation; L-histidine degradation into L-glutamate; N-formimidoyl-L-glutamate from L-histidine: step 1/3. This chain is Histidine ammonia-lyase (Hal), found in Rattus norvegicus (Rat).